Reading from the N-terminus, the 191-residue chain is Penicillin-binding protein activator LpoB (191 aa).

An N-terminal signal peptide occupies residues 1 to 16; that stretch reads MKRYLSLALAALVLTG. Residue Cys17 is the site of N-palmitoyl cysteine attachment. A lipid anchor (S-diacylglycerol cysteine) is attached at Cys17.

It belongs to the LpoB family. Interacts with PBP1b.

The protein resides in the cell outer membrane. Regulator of peptidoglycan synthesis that is essential for the function of penicillin-binding protein 1B (PBP1b). In Yersinia pestis (strain D182038), this protein is Penicillin-binding protein activator LpoB.